Consider the following 292-residue polypeptide: Hypoxia responsive morphology factor A (292 aa).

The Bipartite nuclear localization signal motif lies at 48 to 70 (RRNGRRRNLEYVAQHRRKIARKI). The segment at 156–186 (GKEHYSLHLSTLPAIRNAFGDVIFDAIERSP) is RNA recognition motif (RRM)-like domain.

It belongs to the hrmA family.

The protein resides in the nucleus. In terms of biological role, hypoxia responsive morphology factor that modulates the expression of the subtelomeric hrmA-associated cluster (HAC) containing genes that alter the hyphal surface (such as reduced total chitin or increased beta-glucan exposure) and perturb inter-hyphal interactions within the developing biofilms, resulting in a loss of vertically aligned polarized growing filaments. Consequently, this hypoxia-typic morphotype (called H-MORPH) with altered biofilm architecture leads to increased hypoxia fitness, increased host inflammation, rapid disease progression, and mortality in a murine model of invasive aspergillosis. This is Hypoxia responsive morphology factor A from Aspergillus fumigatus (strain CBS 144.89 / FGSC A1163 / CEA10) (Neosartorya fumigata).